Here is a 567-residue protein sequence, read N- to C-terminus: Urease subunit alpha (567 aa).

The Urease domain occupies 129 to 567 (GGVDSHIHFI…LPLAQRYFLF (439 aa)). H134, H136, and K217 together coordinate Ni(2+). N6-carboxylysine is present on K217. A substrate-binding site is contributed by H219. Ni(2+) is bound by residues H246 and H272. H320 (proton donor) is an active-site residue. Ni(2+) is bound at residue D360.

Belongs to the metallo-dependent hydrolases superfamily. Urease alpha subunit family. As to quaternary structure, heterotrimer of UreA (gamma), UreB (beta) and UreC (alpha) subunits. Three heterotrimers associate to form the active enzyme. The cofactor is Ni cation. Carboxylation allows a single lysine to coordinate two nickel ions.

The protein resides in the cytoplasm. The catalysed reaction is urea + 2 H2O + H(+) = hydrogencarbonate + 2 NH4(+). The protein operates within nitrogen metabolism; urea degradation; CO(2) and NH(3) from urea (urease route): step 1/1. The protein is Urease subunit alpha of Pseudomonas putida (strain ATCC 700007 / DSM 6899 / JCM 31910 / BCRC 17059 / LMG 24140 / F1).